A 217-amino-acid polypeptide reads, in one-letter code: Adapter protein MecA (217 aa).

Belongs to the MecA family. As to quaternary structure, homodimer.

Functionally, enables the recognition and targeting of unfolded and aggregated proteins to the ClpC protease or to other proteins involved in proteolysis. This is Adapter protein MecA from Listeria monocytogenes serovar 1/2a (strain ATCC BAA-679 / EGD-e).